Consider the following 614-residue polypeptide: Heat shock protein SSB1 (614 aa).

Residues methionine 1–glutamate 392 are nucleotide binding domain (NBD). Residues threonine 16–tyrosine 18, lysine 74, glycine 206–threonine 208, glutamate 272–serine 279, and glycine 343 contribute to the ATP site. Positions threonine 393 to proline 403 are inter-domain linker. A substrate binding domain (SBD) region spans residues leucine 404–arginine 614. Residues threonine 517–serine 613 form a lid domain (SBDalpha) region. The Nuclear export signal signature appears at isoleucine 575–methionine 583.

Belongs to the heat shock protein 70 family. Interacts with HAT1 in starvation conditions.

It localises to the nucleus. It is found in the cytoplasm. The enzyme catalyses ATP + H2O = ADP + phosphate + H(+). Functionally, chaperone that interacts with the histone acetyltransferase HAT1 and mediates its translocation from the nucleus to the cytoplasm during germination and starvation conditions. Within the cytoplasm, HAT1 regulates autophagy via acetylation of the autophagy-related proteins ATG3 and ATG9. This Pyricularia oryzae (strain 70-15 / ATCC MYA-4617 / FGSC 8958) (Rice blast fungus) protein is Heat shock protein SSB1.